The sequence spans 335 residues: Foldase protein PrsA (335 aa).

A signal peptide spans 1–20 (MKKKIFAGAVTLLSVAVLAA). Cys-21 is lipidated: N-palmitoyl cysteine. A lipid anchor (S-diacylglycerol cysteine) is attached at Cys-21. The PpiC domain maps to 142-239 (TPEVTAQIIK…ASYYIVKLVK (98 aa)). The segment at 300 to 335 (TGSSTSSSSAASSSKTSESSSAAESSSKEASSSAAE) is disordered. Residues 302–335 (SSTSSSSAASSSKTSESSSAAESSSKEASSSAAE) are compositionally biased toward low complexity.

It belongs to the PrsA family.

The protein localises to the cell membrane. The catalysed reaction is [protein]-peptidylproline (omega=180) = [protein]-peptidylproline (omega=0). In terms of biological role, plays a major role in protein secretion by helping the post-translocational extracellular folding of several secreted proteins. The sequence is that of Foldase protein PrsA from Streptococcus sanguinis (strain SK36).